The primary structure comprises 123 residues: Ribosome-binding factor A (123 aa).

This sequence belongs to the RbfA family. As to quaternary structure, monomer. Binds 30S ribosomal subunits, but not 50S ribosomal subunits or 70S ribosomes.

It is found in the cytoplasm. Functionally, one of several proteins that assist in the late maturation steps of the functional core of the 30S ribosomal subunit. Associates with free 30S ribosomal subunits (but not with 30S subunits that are part of 70S ribosomes or polysomes). Required for efficient processing of 16S rRNA. May interact with the 5'-terminal helix region of 16S rRNA. This Neisseria meningitidis serogroup B (strain ATCC BAA-335 / MC58) protein is Ribosome-binding factor A.